Consider the following 164-residue polypeptide: Thiol peroxidase (164 aa).

Residues 18–163 (INEGDFAPDF…FDAALAAYKN (146 aa)) form the Thioredoxin domain. The Cysteine sulfenic acid (-SOH) intermediate role is filled by cysteine 60. Cysteine 60 and cysteine 93 form a disulfide bridge.

This sequence belongs to the peroxiredoxin family. Tpx subfamily. As to quaternary structure, homodimer.

The catalysed reaction is a hydroperoxide + [thioredoxin]-dithiol = an alcohol + [thioredoxin]-disulfide + H2O. Thiol-specific peroxidase that catalyzes the reduction of hydrogen peroxide and organic hydroperoxides to water and alcohols, respectively. Plays a role in cell protection against oxidative stress by detoxifying peroxides. In Staphylococcus aureus (strain Mu50 / ATCC 700699), this protein is Thiol peroxidase.